We begin with the raw amino-acid sequence, 115 residues long: Large ribosomal subunit protein uL22 (115 aa).

It belongs to the universal ribosomal protein uL22 family. Part of the 50S ribosomal subunit.

Its function is as follows. This protein binds specifically to 23S rRNA; its binding is stimulated by other ribosomal proteins, e.g. L4, L17, and L20. It is important during the early stages of 50S assembly. It makes multiple contacts with different domains of the 23S rRNA in the assembled 50S subunit and ribosome. Functionally, the globular domain of the protein is located near the polypeptide exit tunnel on the outside of the subunit, while an extended beta-hairpin is found that lines the wall of the exit tunnel in the center of the 70S ribosome. The chain is Large ribosomal subunit protein uL22 (rplV) from Wolbachia pipientis wMel.